Here is a 444-residue protein sequence, read N- to C-terminus: Transcription activator AKTR-1 (444 aa).

A DNA-binding region (zn(2)-C6 fungal-type) is located at residues 16–43 (CDFCTQSKLRCNKNKPSCRRCTIQQQPC). The disordered stretch occupies residues 49 to 87 (RRTGRPPKHPRKANDCQEANGQHGEQDPVTSTPGGSCQQ). Over residues 50–59 (RTGRPPKHPR) the composition is skewed to basic residues. Positions 76 to 87 (PVTSTPGGSCQQ) are enriched in polar residues.

It is found in the nucleus. Its function is as follows. Transcription factor that regulates the expression of the gene clusters that mediate the biosynthesis of the host-selective toxins (HSTs) AK-toxins responsible for Japanese pear black spot disease by the Japanese pear pathotype. AK-toxins are esters of 9,10-epoxy 8-hydroxy 9-methyldecatrienoic acid (EDA). On cellular level, AK-toxins affect plasma membrane of susceptible cells and cause a sudden increase in loss of K(+) after a few minutes of toxin treatment. This chain is Transcription activator AKTR-1, found in Alternaria alternata (Alternaria rot fungus).